An 84-amino-acid chain; its full sequence is Envelope glycoprotein N (84 aa).

Residues 1 to 26 (MSCKKSARQSLYVSLCLFYILVFAAA) form the signal peptide. Residues 27–47 (TEVDFYSPECHSHTYEIVLNS) lie on the Virion surface side of the membrane. A helical membrane pass occupies residues 48-68 (FSSIWLLINLFLLLCSFAIFL). Topologically, residues 69-84 (KYWCYKTFASETVKGY) are intravirion.

This sequence belongs to the herpesviridae glycoprotein N family. In terms of assembly, interacts (via N-terminus) with gM (via N-terminus). The gM-gN heterodimer forms the gCII complex.

The protein localises to the virion membrane. Its subcellular location is the host membrane. It is found in the host Golgi apparatus. It localises to the host trans-Golgi network. Envelope glycoprotein necessary for proper maturation of gM and modulation of its membrane fusion activity. Also plays a critical role in virion morphogenesis. The polypeptide is Envelope glycoprotein N (Homo sapiens (Human)).